The primary structure comprises 312 residues: Ribonuclease Z (312 aa).

The Zn(2+) site is built by H63, H65, D67, H68, H141, D212, and H270. The Proton acceptor role is filled by D67.

This sequence belongs to the RNase Z family. In terms of assembly, homodimer. Zn(2+) serves as cofactor.

The enzyme catalyses Endonucleolytic cleavage of RNA, removing extra 3' nucleotides from tRNA precursor, generating 3' termini of tRNAs. A 3'-hydroxy group is left at the tRNA terminus and a 5'-phosphoryl group is left at the trailer molecule.. Zinc phosphodiesterase, which displays some tRNA 3'-processing endonuclease activity. Probably involved in tRNA maturation, by removing a 3'-trailer from precursor tRNA. This Lactobacillus acidophilus (strain ATCC 700396 / NCK56 / N2 / NCFM) protein is Ribonuclease Z.